The chain runs to 114 residues: Large ribosomal subunit protein uL18 (114 aa).

This sequence belongs to the universal ribosomal protein uL18 family. In terms of assembly, part of the 50S ribosomal subunit; part of the 5S rRNA/L5/L18/L25 subcomplex. Contacts the 5S and 23S rRNAs.

Functionally, this is one of the proteins that bind and probably mediate the attachment of the 5S RNA into the large ribosomal subunit, where it forms part of the central protuberance. This is Large ribosomal subunit protein uL18 from Bacteroides fragilis (strain ATCC 25285 / DSM 2151 / CCUG 4856 / JCM 11019 / LMG 10263 / NCTC 9343 / Onslow / VPI 2553 / EN-2).